The sequence spans 491 residues: Ketol-acid reductoisomerase (NADP(+)) (491 aa).

In terms of domain architecture, KARI N-terminal Rossmann spans 15–208 (AQLGKCRFMG…GGHRAGVLES (194 aa)). NADP(+) contacts are provided by residues 45-48 (CGAQ), Arg-68, Arg-76, Ser-78, and 108-110 (DKQ). The active site involves His-132. Gly-158 lines the NADP(+) pocket. KARI C-terminal knotted domains lie at 209-344 (SFVA…TAPQ) and 345-484 (FEGK…MTDM). Residues Asp-217, Glu-221, Glu-389, and Glu-393 each contribute to the Mg(2+) site. Ser-414 is a substrate binding site.

It belongs to the ketol-acid reductoisomerase family. Mg(2+) is required as a cofactor.

The enzyme catalyses (2R)-2,3-dihydroxy-3-methylbutanoate + NADP(+) = (2S)-2-acetolactate + NADPH + H(+). It carries out the reaction (2R,3R)-2,3-dihydroxy-3-methylpentanoate + NADP(+) = (S)-2-ethyl-2-hydroxy-3-oxobutanoate + NADPH + H(+). The protein operates within amino-acid biosynthesis; L-isoleucine biosynthesis; L-isoleucine from 2-oxobutanoate: step 2/4. It participates in amino-acid biosynthesis; L-valine biosynthesis; L-valine from pyruvate: step 2/4. Its function is as follows. Involved in the biosynthesis of branched-chain amino acids (BCAA). Catalyzes an alkyl-migration followed by a ketol-acid reduction of (S)-2-acetolactate (S2AL) to yield (R)-2,3-dihydroxy-isovalerate. In the isomerase reaction, S2AL is rearranged via a Mg-dependent methyl migration to produce 3-hydroxy-3-methyl-2-ketobutyrate (HMKB). In the reductase reaction, this 2-ketoacid undergoes a metal-dependent reduction by NADPH to yield (R)-2,3-dihydroxy-isovalerate. The polypeptide is Ketol-acid reductoisomerase (NADP(+)) (Salmonella dublin (strain CT_02021853)).